The chain runs to 164 residues: Peptide methionine sulfoxide reductase MsrA (164 aa).

Cys-16 is an active-site residue.

It belongs to the MsrA Met sulfoxide reductase family.

It carries out the reaction L-methionyl-[protein] + [thioredoxin]-disulfide + H2O = L-methionyl-(S)-S-oxide-[protein] + [thioredoxin]-dithiol. It catalyses the reaction [thioredoxin]-disulfide + L-methionine + H2O = L-methionine (S)-S-oxide + [thioredoxin]-dithiol. Functionally, has an important function as a repair enzyme for proteins that have been inactivated by oxidation. Catalyzes the reversible oxidation-reduction of methionine sulfoxide in proteins to methionine. The sequence is that of Peptide methionine sulfoxide reductase MsrA from Clostridium tetani (strain Massachusetts / E88).